Consider the following 323-residue polypeptide: Homoserine kinase (323 aa).

97 to 107 (PHGRGMGSSGA) is a binding site for ATP.

Belongs to the GHMP kinase family. Homoserine kinase subfamily.

The protein localises to the cytoplasm. It carries out the reaction L-homoserine + ATP = O-phospho-L-homoserine + ADP + H(+). It participates in amino-acid biosynthesis; L-threonine biosynthesis; L-threonine from L-aspartate: step 4/5. In terms of biological role, catalyzes the ATP-dependent phosphorylation of L-homoserine to L-homoserine phosphate. The chain is Homoserine kinase from Leifsonia xyli subsp. xyli (strain CTCB07).